The primary structure comprises 403 residues: S-adenosylmethionine synthase (403 aa).

H17 contacts ATP. D19 lines the Mg(2+) pocket. Position 45 (E45) interacts with K(+). Positions 58 and 104 each coordinate L-methionine. The segment at 104-114 (QSPDIAQGVDT) is flexible loop. ATP is bound by residues 179–181 (DGK), 250–251 (KF), D259, 265–266 (RK), A282, and K286. D259 lines the L-methionine pocket. K290 contacts L-methionine.

It belongs to the AdoMet synthase family. As to quaternary structure, homotetramer; dimer of dimers. It depends on Mg(2+) as a cofactor. K(+) is required as a cofactor.

The protein localises to the cytoplasm. The catalysed reaction is L-methionine + ATP + H2O = S-adenosyl-L-methionine + phosphate + diphosphate. The protein operates within amino-acid biosynthesis; S-adenosyl-L-methionine biosynthesis; S-adenosyl-L-methionine from L-methionine: step 1/1. In terms of biological role, catalyzes the formation of S-adenosylmethionine (AdoMet) from methionine and ATP. The overall synthetic reaction is composed of two sequential steps, AdoMet formation and the subsequent tripolyphosphate hydrolysis which occurs prior to release of AdoMet from the enzyme. This chain is S-adenosylmethionine synthase, found in Mycobacterium tuberculosis (strain ATCC 25177 / H37Ra).